The primary structure comprises 846 residues: Spindle pole body component SPC98 (846 aa).

Ser-124 and Ser-136 each carry phosphoserine.

This sequence belongs to the TUBGCP family. Interacts with TUB4, SPC72 and SPC97.

Its subcellular location is the nucleus. It localises to the cytoplasm. It is found in the cytoskeleton. The protein localises to the microtubule organizing center. The protein resides in the spindle pole body. In terms of biological role, involved in microtubule organization by the microtubule organizing center, the spindle pole body (SPB). Probably part of the microtubule attachment site at the SPB. The protein is Spindle pole body component SPC98 (SPC98) of Saccharomyces cerevisiae (strain ATCC 204508 / S288c) (Baker's yeast).